Consider the following 136-residue polypeptide: Translation initiation factor 5A (136 aa).

Hypusine is present on Lys-38.

It belongs to the eIF-5A family.

The protein localises to the cytoplasm. Functions by promoting the formation of the first peptide bond. This chain is Translation initiation factor 5A, found in Methanopyrus kandleri (strain AV19 / DSM 6324 / JCM 9639 / NBRC 100938).